The sequence spans 213 residues: Nucleolar protein 12 (213 aa).

Residues 33-96 (GFHKRKVERK…RLVTAKTESV (64 aa)) are a coiled coil. The disordered stretch occupies residues 109–213 (TISDLDLSGA…LTGKAQHSRE (105 aa)). Over residues 130-139 (AGDESEEEAS) the composition is skewed to acidic residues. Over residues 170–182 (AHSRKKVKRKHPR) the composition is skewed to basic residues.

Belongs to the RRP17 family. As to quaternary structure, interacts with KIAA1191.

It is found in the nucleus. Its subcellular location is the nucleolus. It localises to the cytoplasm. Multifunctional RNA binding protein that plays a role in RNA metabolism and DNA maintenance. Participates in the resolution of DNA stress and the maintenance of genome integrity by localizing to sites of DNA insults. Also plays a role in proper nucleolar organization by limiting nucleolar size and regulating nucleolar number. Mechanistically, regulates the nucleolar levels of fibrillarin and nucleolin, two key players in pre-rRNA processing and ribosome assembly. This chain is Nucleolar protein 12 (NOL12), found in Pongo abelii (Sumatran orangutan).